Consider the following 269-residue polypeptide: MHVNGKVALVTGAAQGIGKAFAEALLLHGAKVALVDWNLEAGVKCKAALDEQFEPQKTLFVQCDVADQKQLRDTFRKVVDHFGRLDILVNNAGVNNEKNWEQTLQINLVSVISGTYLGLDYMSKQNGGEGGIIINMSSLAGLMPVAQQPVYCASKHGIIGFTRSAAMAANLMKSGVRLNVICPGFVDTPILESIEKEENMGQYIEYKDQIKAMMKFYGVLHPSTIANGLINLIEDDALNGAIMKITASKGIHFQDYDISPLLVKAPLTS.

Residues 12-20 (GAAQGIGKA), 36-37 (DW), 63-65 (CDV), and asparagine 91 each bind NAD(+). Residues serine 138 and glutamine 148 each coordinate substrate. The Proton acceptor role is filled by tyrosine 151. Residues 151–155 (YCASK) and 186–188 (VDT) contribute to the NAD(+) site.

This sequence belongs to the short-chain dehydrogenases/reductases (SDR) family. Homodimer. As to expression, expressed in proximal convoluted tubules of the kidney, where it colocalizes with the prostaglandin transporter SLC22A22 (at protein level). Expressed in lung, intestine, stomach and liver.

It is found in the cytoplasm. The catalysed reaction is prostaglandin E2 + NAD(+) = 15-oxoprostaglandin E2 + NADH + H(+). The enzyme catalyses (15S)-hydroxy-(5Z,8Z,11Z,13E)-eicosatetraenoate + NAD(+) = 15-oxo-(5Z,8Z,11Z,13E)-eicosatetraenoate + NADH + H(+). It catalyses the reaction (11R)-hydroxy-(5Z,8Z,12E,14Z)-eicosatetraenoate + NAD(+) = 11-oxo-(5Z,8Z,12E,14Z)-eicosatetraenoate + NADH + H(+). It carries out the reaction lipoxin A4 + NAD(+) = 15-oxo-(5S,6R)-dihydroxy-(7E,9E,11Z,13E)-eicosatetraenoate + NADH + H(+). The catalysed reaction is 15-oxo-(5S,6R)-dihydroxy-(7E,9E,11Z)-eicosatrienoate + NADH + H(+) = (5S,6R,15S)-trihydroxy-(7E,9E,11Z)-eicosatrienoate + NAD(+). The enzyme catalyses prostaglandin A1 + NAD(+) = 15-oxo-prostaglandin A1 + NADH + H(+). It catalyses the reaction prostaglandin E1 + NAD(+) = 15-oxoprostaglandin E1 + NADH + H(+). It carries out the reaction 14-hydroxy-(4Z,7Z,10Z,12E,16Z,19Z)-docosahexaenoate + NAD(+) = 14-oxo-(4Z,7Z,10Z,12E,16Z,19Z)-docosahexaenoate + NADH + H(+). The catalysed reaction is resolvin E1 + NAD(+) = 18-oxo-resolvin E1 + NADH + H(+). The enzyme catalyses resolvin D1 + NAD(+) = 8-oxoresolvin D1 + NADH + H(+). It catalyses the reaction resolvin D1 + NAD(+) = 17-oxoresolvin D1 + NADH + H(+). It carries out the reaction resolvin D2 + NAD(+) = 7-oxoresolvin D2 + NADH + H(+). The catalysed reaction is resolvin D2 + NAD(+) = 16-oxoresolvin D2 + NADH + H(+). In terms of biological role, catalyzes the NAD-dependent dehydrogenation (oxidation) of a broad array of hydroxylated polyunsaturated fatty acids (mainly eicosanoids and docosanoids, including prostaglandins, lipoxins and resolvins), yielding their corresponding keto (oxo) metabolites. Decreases the levels of the pro-proliferative prostaglandins such as prostaglandin E2 (whose activity is increased in cancer because of an increase in the expression of cyclooxygenase 2) and generates oxo-fatty acid products that can profoundly influence cell function by abrogating pro-inflammatory cytokine expression. Converts resolvins E1, D1 and D2 to their oxo products, which represents a mode of resolvin inactivation. Resolvin E1 plays important roles during the resolution phase of acute inflammation, while resolvins D1 and D2 have a unique role in obesity-induced adipose inflammation. This chain is 15-hydroxyprostaglandin dehydrogenase [NAD(+)] (Hpgd), found in Mus musculus (Mouse).